Here is a 127-residue protein sequence, read N- to C-terminus: Large ribosomal subunit protein bL20 (127 aa).

This sequence belongs to the bacterial ribosomal protein bL20 family.

Binds directly to 23S ribosomal RNA and is necessary for the in vitro assembly process of the 50S ribosomal subunit. It is not involved in the protein synthesizing functions of that subunit. The protein is Large ribosomal subunit protein bL20 of Streptomyces avermitilis (strain ATCC 31267 / DSM 46492 / JCM 5070 / NBRC 14893 / NCIMB 12804 / NRRL 8165 / MA-4680).